The following is a 228-amino-acid chain: Small ribosomal subunit protein uS7A (228 aa).

It belongs to the universal ribosomal protein uS7 family.

In Drosophila melanogaster (Fruit fly), this protein is Small ribosomal subunit protein uS7A (RpS5a).